A 172-amino-acid polypeptide reads, in one-letter code: MLKKFFLPDEFVKNIFHITPEKLKERNVKGIITDLDNTLVEWDRPNATPRLIEWFEEMKEHGIKVTIVSNNNERRVKLFSEPLGIPFIYKARKPMGKAFNRAVRNMELKKEDCVVIGDQLLTDVLGGNRNGYHTILVVPVASSDGFITRFNRQVERRILSALKRKGHIQWEE.

Its function is as follows. Has low dephosphorylation activity on GMP and glucose-6-phosphate. This chain is Probable phosphatase YqeG (yqeG), found in Bacillus subtilis (strain 168).